We begin with the raw amino-acid sequence, 561 residues long: Zinc finger protein with KRAB and SCAN domains 1 (561 aa).

The disordered stretch occupies residues 1–51 (MMTAESRETTGLSPQAAQEKDGIVIVKVEEEDEEDHMWGQDSSLQETPPPD). At S13 the chain carries Phosphoserine. K27 is covalently cross-linked (Glycyl lysine isopeptide (Lys-Gly) (interchain with G-Cter in SUMO2)). Residues 56-138 (RQRFRRFCYQ…TLLEDLELDL (83 aa)) form the SCAN box domain. A disordered region spans residues 163–187 (VQESSSFDHHETAQSHFKHSSRKPR). Over residues 178–187 (HFKHSSRKPR) the composition is skewed to basic residues. Glycyl lysine isopeptide (Lys-Gly) (interchain with G-Cter in SUMO2) cross-links involve residues K180 and K226. Residues 225–304 (VKIEDMAVSL…QKEFGEKREQ (80 aa)) enclose the KRAB domain. Polar residues predominate over residues 260–275 (NVFSQGSENRNGNEST). The disordered stretch occupies residues 260–372 (NVFSQGSENR…NTPEEAPSGA (113 aa)). Composition is skewed to basic and acidic residues over residues 276–286 (SKAEVKEDSTS) and 294–349 (FQKE…EKGK). Residues K277, K296, K301, and K336 each participate in a glycyl lysine isopeptide (Lys-Gly) (interchain with G-Cter in SUMO2) cross-link. Over residues 355 to 365 (FSLSANFNNTP) the composition is skewed to polar residues. A Glycyl lysine isopeptide (Lys-Gly) (interchain with G-Cter in SUMO2) cross-link involves residue K373. 6 consecutive C2H2-type zinc fingers follow at residues 375 to 397 (HRCD…KIIH), 403 to 425 (YECN…QRIH), 431 to 453 (HECN…QRIH), 459 to 481 (YECN…QRIH), 487 to 509 (YECS…RRIH), and 515 to 537 (YKCT…HRIH). Glycyl lysine isopeptide (Lys-Gly) (interchain with G-Cter in SUMO2) cross-links involve residues K410, K438, and K476. K558 participates in a covalent cross-link: Glycyl lysine isopeptide (Lys-Gly) (interchain with G-Cter in SUMO2).

It belongs to the krueppel C2H2-type zinc-finger protein family.

It is found in the nucleus. Functionally, may be involved in transcriptional regulation. The polypeptide is Zinc finger protein with KRAB and SCAN domains 1 (Zkscan1) (Mus musculus (Mouse)).